A 732-amino-acid chain; its full sequence is Phosphoribosylformylglycinamidine synthase subunit PurL (732 aa).

H42 is an active-site residue. The ATP site is built by Y45 and K84. E86 provides a ligand contact to Mg(2+). Substrate-binding positions include 87-90 (SHNH) and R109. The active-site Proton acceptor is the H88. D110 is a Mg(2+) binding site. Q238 serves as a coordination point for substrate. Position 266 (D266) interacts with Mg(2+). Residue 310 to 312 (ESQ) coordinates substrate. Residues D496 and G533 each contribute to the ATP site. N534 is a Mg(2+) binding site. Residue S536 coordinates substrate.

Belongs to the FGAMS family. Monomer. Part of the FGAM synthase complex composed of 1 PurL, 1 PurQ and 2 PurS subunits.

Its subcellular location is the cytoplasm. The catalysed reaction is N(2)-formyl-N(1)-(5-phospho-beta-D-ribosyl)glycinamide + L-glutamine + ATP + H2O = 2-formamido-N(1)-(5-O-phospho-beta-D-ribosyl)acetamidine + L-glutamate + ADP + phosphate + H(+). It participates in purine metabolism; IMP biosynthesis via de novo pathway; 5-amino-1-(5-phospho-D-ribosyl)imidazole from N(2)-formyl-N(1)-(5-phospho-D-ribosyl)glycinamide: step 1/2. In terms of biological role, part of the phosphoribosylformylglycinamidine synthase complex involved in the purines biosynthetic pathway. Catalyzes the ATP-dependent conversion of formylglycinamide ribonucleotide (FGAR) and glutamine to yield formylglycinamidine ribonucleotide (FGAM) and glutamate. The FGAM synthase complex is composed of three subunits. PurQ produces an ammonia molecule by converting glutamine to glutamate. PurL transfers the ammonia molecule to FGAR to form FGAM in an ATP-dependent manner. PurS interacts with PurQ and PurL and is thought to assist in the transfer of the ammonia molecule from PurQ to PurL. In Campylobacter hominis (strain ATCC BAA-381 / DSM 21671 / CCUG 45161 / LMG 19568 / NCTC 13146 / CH001A), this protein is Phosphoribosylformylglycinamidine synthase subunit PurL.